The following is a 290-amino-acid chain: Shikimate dehydrogenase (NADP(+)) (290 aa).

Shikimate is bound by residues 20–22 (SLS) and threonine 67. Lysine 71 acts as the Proton acceptor in catalysis. Residues asparagine 92 and aspartate 107 each contribute to the shikimate site. Residues 132 to 136 (GAGGA) and methionine 228 each bind NADP(+). Tyrosine 230 contacts shikimate. Glycine 251 serves as a coordination point for NADP(+).

This sequence belongs to the shikimate dehydrogenase family. In terms of assembly, homodimer.

It catalyses the reaction shikimate + NADP(+) = 3-dehydroshikimate + NADPH + H(+). It participates in metabolic intermediate biosynthesis; chorismate biosynthesis; chorismate from D-erythrose 4-phosphate and phosphoenolpyruvate: step 4/7. Its function is as follows. Involved in the biosynthesis of the chorismate, which leads to the biosynthesis of aromatic amino acids. Catalyzes the reversible NADPH linked reduction of 3-dehydroshikimate (DHSA) to yield shikimate (SA). This chain is Shikimate dehydrogenase (NADP(+)), found in Geobacter sp. (strain M21).